Here is a 490-residue protein sequence, read N- to C-terminus: Aspartyl/glutamyl-tRNA(Asn/Gln) amidotransferase subunit B (490 aa).

This sequence belongs to the GatB/GatE family. GatB subfamily. As to quaternary structure, heterotrimer of A, B and C subunits.

It carries out the reaction L-glutamyl-tRNA(Gln) + L-glutamine + ATP + H2O = L-glutaminyl-tRNA(Gln) + L-glutamate + ADP + phosphate + H(+). The catalysed reaction is L-aspartyl-tRNA(Asn) + L-glutamine + ATP + H2O = L-asparaginyl-tRNA(Asn) + L-glutamate + ADP + phosphate + 2 H(+). Allows the formation of correctly charged Asn-tRNA(Asn) or Gln-tRNA(Gln) through the transamidation of misacylated Asp-tRNA(Asn) or Glu-tRNA(Gln) in organisms which lack either or both of asparaginyl-tRNA or glutaminyl-tRNA synthetases. The reaction takes place in the presence of glutamine and ATP through an activated phospho-Asp-tRNA(Asn) or phospho-Glu-tRNA(Gln). This is Aspartyl/glutamyl-tRNA(Asn/Gln) amidotransferase subunit B from Prochlorococcus marinus subsp. pastoris (strain CCMP1986 / NIES-2087 / MED4).